Consider the following 45-residue polypeptide: Large ribosomal subunit protein bL34 (45 aa).

Residues 1 to 45 (MTKRTFQPNNRRRARKHGFRARMRTRAGRAILSARRGKNRAELSA) are disordered. Positions 10–27 (NRRRARKHGFRARMRTRA) are enriched in basic residues.

It belongs to the bacterial ribosomal protein bL34 family.

The sequence is that of Large ribosomal subunit protein bL34 from Micrococcus luteus (strain ATCC 4698 / DSM 20030 / JCM 1464 / CCM 169 / CCUG 5858 / IAM 1056 / NBRC 3333 / NCIMB 9278 / NCTC 2665 / VKM Ac-2230) (Micrococcus lysodeikticus).